The chain runs to 544 residues: Phosphoenolpyruvate carboxykinase (ATP) (544 aa).

ATP is bound at residue 246 to 253 (GLSGTGKT).

It belongs to the phosphoenolpyruvate carboxykinase (ATP) family.

The enzyme catalyses oxaloacetate + ATP = phosphoenolpyruvate + ADP + CO2. The protein operates within carbohydrate biosynthesis; gluconeogenesis. The sequence is that of Phosphoenolpyruvate carboxykinase (ATP) (PCK1) from Candida glabrata (strain ATCC 2001 / BCRC 20586 / JCM 3761 / NBRC 0622 / NRRL Y-65 / CBS 138) (Yeast).